A 259-amino-acid chain; its full sequence is NADPH-dependent reductase BacG (259 aa).

NADP(+) is bound by residues Ser-12–Ile-15, Ser-34–Asn-36, Asp-62–Met-63, Ile-90, Lys-113, and Gly-185–Arg-191.

The protein belongs to the short-chain dehydrogenases/reductases (SDR) family. As to quaternary structure, homodimer.

It is found in the cytoplasm. It participates in antibiotic biosynthesis; bacilysin biosynthesis. Along with the bacABCDEF operon, BacG is involved in the biosynthesis of the nonribosomally synthesized dipeptide antibiotic bacilysin, composed of L-alanine and L-anticapsin. Bacilysin is an irreversible inactivator of the glutaminase domain of glucosamine synthetase. BacG catalyzes the stereoselective reduction of exocyclic-delta(3),delta(5)-dihydro-hydroxyphenylpyruvate (ex-H2HPP), adding a pro-S hydride equivalent to C4 position to yield tetrahydro-hydroxyphenylpyruvate (H4HPP). Although the 3Z,7R-ex-H2HPP isomer is kinetically disfavored by BacB and produced in a smaller quantity than 3E,7R-ex-H2HPP, it is the preferred substrate for the conjugate reduction reaction of BacG. This Bacillus subtilis (strain 168) protein is NADPH-dependent reductase BacG.